The sequence spans 1177 residues: Topoisomerase 1-associated factor 1 (1177 aa).

5 disordered regions span residues Met-332–Glu-353, Lys-576–Ile-598, Ala-802–Val-830, Asp-893–Met-1012, and Ala-1028–Glu-1177. Residues Gly-586–Asp-597 show a composition bias toward acidic residues. The segment covering Asp-893–Arg-908 has biased composition (basic and acidic residues). Acidic residues predominate over residues Phe-923–Val-934. Basic and acidic residues-rich tracts occupy residues Glu-935–Arg-955 and Lys-975–Asp-1001. The span at Ser-1002–Asp-1011 shows a compositional bias: acidic residues. Residues Arg-1054 to Ala-1066 show a composition bias toward basic residues. The segment covering Asp-1071–Gln-1080 has biased composition (acidic residues). The span at Thr-1129 to Ser-1140 shows a compositional bias: polar residues. Acidic residues predominate over residues Met-1145–Ala-1155.

This sequence belongs to the timeless family. Component of the fork protection complex (FPC) consisting of TOF1 and CSM3.

The protein localises to the nucleus. In terms of biological role, forms a fork protection complex (FPC) with CSM3 and which is required for chromosome segregation during meiosis and DNA damage repair. FPC coordinates leading and lagging strand synthesis and moves with the replication fork. FPC stabilizes replication forks in a configuration that is recognized by replication checkpoint sensors. The polypeptide is Topoisomerase 1-associated factor 1 (TOF1) (Phaeosphaeria nodorum (strain SN15 / ATCC MYA-4574 / FGSC 10173) (Glume blotch fungus)).